The chain runs to 352 residues: Glycerol-1-phosphate dehydrogenase [NAD(P)+] (352 aa).

NAD(+) is bound by residues 99 to 103 (GTKID) and 121 to 124 (TSPS). Position 126 (D126) interacts with substrate. S130 is a binding site for NAD(+). Residue D173 participates in substrate binding. Zn(2+) contacts are provided by D173 and H253. Position 257 (H257) interacts with substrate. H269 serves as a coordination point for Zn(2+).

The protein belongs to the glycerol-1-phosphate dehydrogenase family. Requires Zn(2+) as cofactor.

Its subcellular location is the cytoplasm. The enzyme catalyses sn-glycerol 1-phosphate + NAD(+) = dihydroxyacetone phosphate + NADH + H(+). The catalysed reaction is sn-glycerol 1-phosphate + NADP(+) = dihydroxyacetone phosphate + NADPH + H(+). The protein operates within membrane lipid metabolism; glycerophospholipid metabolism. Its function is as follows. Catalyzes the NAD(P)H-dependent reduction of dihydroxyacetonephosphate (DHAP or glycerone phosphate) to glycerol 1-phosphate (G1P). The G1P thus generated is used as the glycerophosphate backbone of phospholipids in the cellular membranes of Archaea. The polypeptide is Glycerol-1-phosphate dehydrogenase [NAD(P)+] (Thermoplasma volcanium (strain ATCC 51530 / DSM 4299 / JCM 9571 / NBRC 15438 / GSS1)).